A 367-amino-acid chain; its full sequence is MLGLGPQQAAFEAALGALPDRLLDTPVGVAVSGGSDSLALLILAHRWAARRGRVLRALTVDHGLRPESRAEAEAVGRLCADMGIEHDILRLEGAAPRQSALRRGRHAALARTIADKSGHLLLTGHTADDQAETFLMRARQGSGWYGLAGMRPLSLSPVWPEGEGVFIARPLLGIRREALRAFLRDEGLGWADDPSNDNPAFERVRMRRLLCPEMSRNVPVLSLVDRFQTLRMIEDGAIWRWMTANVRAGEAGIHVASFAGHPPERAARALGMLLQIAAGREMPPRGESLRRLAEEIVSKGDFRGATLGGCRITARRTHICLKPECGPLPPGTAARLAATQAILSGNPNEIAASAGKESFLEDLVPIF.

ATP is bound at residue serine 32 to serine 37.

The protein belongs to the tRNA(Ile)-lysidine synthase family.

It localises to the cytoplasm. The enzyme catalyses cytidine(34) in tRNA(Ile2) + L-lysine + ATP = lysidine(34) in tRNA(Ile2) + AMP + diphosphate + H(+). Its function is as follows. Ligates lysine onto the cytidine present at position 34 of the AUA codon-specific tRNA(Ile) that contains the anticodon CAU, in an ATP-dependent manner. Cytidine is converted to lysidine, thus changing the amino acid specificity of the tRNA from methionine to isoleucine. This is tRNA(Ile)-lysidine synthase from Hyphomonas neptunium (strain ATCC 15444).